Reading from the N-terminus, the 274-residue chain is Subtilisin DY (274 aa).

Ca(2+) is bound at residue Gln-2. The 269-residue stretch at 5 to 273 folds into the Peptidase S8 domain; it reads PYGIPLIKAD…KGLINVEAAA (269 aa). Asp-32 serves as the catalytic Charge relay system. Asp-41 contributes to the Ca(2+) binding site. His-63 serves as the catalytic Charge relay system. Leu-74, Asn-76, Val-80, Ala-168, Tyr-170, and Val-173 together coordinate Ca(2+). Catalysis depends on Ser-220, which acts as the Charge relay system.

Belongs to the peptidase S8 family. It depends on Ca(2+) as a cofactor.

It is found in the secreted. It carries out the reaction Hydrolysis of proteins with broad specificity for peptide bonds, and a preference for a large uncharged residue in P1. Hydrolyzes peptide amides.. Functionally, subtilisin is an extracellular alkaline serine protease, it catalyzes the hydrolysis of proteins and peptide amides. This chain is Subtilisin DY (apr), found in Bacillus licheniformis.